The sequence spans 562 residues: 3-hydroxy-3-methylglutaryl-coenzyme A reductase 2 (562 aa).

Transmembrane regions (helical) follow at residues 32 to 56 (ALPLPLYLTNTFFLSLFFATVYFLL) and 77 to 100 (ICALIGFVASFIYLLGFCGIDLIF). The interval 101-146 (RSSSDDDVWVNDGMIPCNQSLDCREVLPIKPNSVDPPRESELDSVE) is linker. N-linked (GlcNAc...) asparagine glycosylation is present at N118. Residues 147–562 (DEEIVKLVID…DIGPSSQVNR (416 aa)) are catalytic. The active-site Charge relay system is the E240. N304 is a glycosylation site (N-linked (GlcNAc...) asparagine). Catalysis depends on charge relay system residues K372 and D448. The active-site Proton donor is H544. An N-linked (GlcNAc...) asparagine glycan is attached at N548. S550 carries the post-translational modification Phosphoserine.

This sequence belongs to the HMG-CoA reductase family. Restricted to young seedlings, roots, and inflorescences. Expressed in root tips, shoot apex, secretory zone of the stigma, microspores, mature pollen grains, gynoecium vascular tissue and fertilized ovules.

It is found in the endoplasmic reticulum membrane. It carries out the reaction (R)-mevalonate + 2 NADP(+) + CoA = (3S)-3-hydroxy-3-methylglutaryl-CoA + 2 NADPH + 2 H(+). It participates in metabolic intermediate biosynthesis; (R)-mevalonate biosynthesis; (R)-mevalonate from acetyl-CoA: step 3/3. Its activity is regulated as follows. Regulated at the post-translational level in response to alterations of the sphingolipid and the sterol biosynthetic pathways. In terms of biological role, catalyzes the synthesis of mevalonate. The specific precursor of all isoprenoid compounds present in plants. The polypeptide is 3-hydroxy-3-methylglutaryl-coenzyme A reductase 2 (HMG2) (Arabidopsis thaliana (Mouse-ear cress)).